A 257-amino-acid polypeptide reads, in one-letter code: Putative cysteine-rich repeat secretory protein 28 (257 aa).

Residues 1–26 (MFSTFGSVPILTVVAIQLFLIRNVLS) form the signal peptide. Gnk2-homologous domains are found at residues 32-136 (AYLH…TVDS) and 142-254 (YEND…LYPF).

This sequence belongs to the cysteine-rich repeat secretory protein family.

Its subcellular location is the secreted. The protein is Putative cysteine-rich repeat secretory protein 28 (CRRSP28) of Arabidopsis thaliana (Mouse-ear cress).